A 302-amino-acid polypeptide reads, in one-letter code: Deoxyhypusine hydroxylase (302 aa).

6 HEAT-like PBS-type repeats span residues 23–49 (ERFR…AFDD), 54–80 (LKHE…VLKD), 87–113 (VRHE…YKKD), 175–201 (DRYR…GLKD), 206–232 (FRHE…NLED), and 239–265 (VRHE…YADD). The Fe cation site is built by His-56, Glu-57, His-89, and Glu-90. 4 residues coordinate Fe cation: His-208, Glu-209, His-241, and Glu-242.

This sequence belongs to the deoxyhypusine hydroxylase family. Requires Fe(2+) as cofactor.

The protein localises to the endoplasmic reticulum membrane. It carries out the reaction [eIF5A protein]-deoxyhypusine + AH2 + O2 = [eIF5A protein]-hypusine + A + H2O. Its pathway is protein modification; eIF5A hypusination. Functionally, catalyzes the hydroxylation of the N(6)-(4-aminobutyl)-L-lysine intermediate to form hypusine, an essential post-translational modification only found in mature eIF-5A factor. Essential for organismal viability and plays a role in a wide number of important processes such as cell growth and proliferation, and regulates induction of autophagy and protein synthesis. Has a role in eIF-5A-mediated translational control. This is Deoxyhypusine hydroxylase from Drosophila pseudoobscura pseudoobscura (Fruit fly).